Consider the following 374-residue polypeptide: Tetraacyldisaccharide 4'-kinase (374 aa).

An ATP-binding site is contributed by 66 to 73; the sequence is TAGGTGKT.

The protein belongs to the LpxK family.

The enzyme catalyses a lipid A disaccharide + ATP = a lipid IVA + ADP + H(+). It functions in the pathway glycolipid biosynthesis; lipid IV(A) biosynthesis; lipid IV(A) from (3R)-3-hydroxytetradecanoyl-[acyl-carrier-protein] and UDP-N-acetyl-alpha-D-glucosamine: step 6/6. Its function is as follows. Transfers the gamma-phosphate of ATP to the 4'-position of a tetraacyldisaccharide 1-phosphate intermediate (termed DS-1-P) to form tetraacyldisaccharide 1,4'-bis-phosphate (lipid IVA). The sequence is that of Tetraacyldisaccharide 4'-kinase from Syntrophus aciditrophicus (strain SB).